We begin with the raw amino-acid sequence, 569 residues long: 2-succinyl-5-enolpyruvyl-6-hydroxy-3-cyclohexene-1-carboxylate synthase (569 aa).

The protein belongs to the TPP enzyme family. MenD subfamily. Homodimer. Requires Mg(2+) as cofactor. Mn(2+) is required as a cofactor. The cofactor is thiamine diphosphate.

The catalysed reaction is isochorismate + 2-oxoglutarate + H(+) = 5-enolpyruvoyl-6-hydroxy-2-succinyl-cyclohex-3-ene-1-carboxylate + CO2. The protein operates within quinol/quinone metabolism; 1,4-dihydroxy-2-naphthoate biosynthesis; 1,4-dihydroxy-2-naphthoate from chorismate: step 2/7. It participates in quinol/quinone metabolism; menaquinone biosynthesis. Catalyzes the thiamine diphosphate-dependent decarboxylation of 2-oxoglutarate and the subsequent addition of the resulting succinic semialdehyde-thiamine pyrophosphate anion to isochorismate to yield 2-succinyl-5-enolpyruvyl-6-hydroxy-3-cyclohexene-1-carboxylate (SEPHCHC). This Paenarthrobacter aurescens (strain TC1) protein is 2-succinyl-5-enolpyruvyl-6-hydroxy-3-cyclohexene-1-carboxylate synthase.